Consider the following 968-residue polypeptide: Phosphoenolpyruvate carboxylase 3 (968 aa).

Ser11 carries the phosphoserine modification. Catalysis depends on residues His173 and Lys603. Ser705 is subject to Phosphoserine.

It belongs to the PEPCase type 1 family. In terms of assembly, homotetramer. It depends on Mg(2+) as a cofactor. In terms of tissue distribution, expressed in roots and siliques, and to a lower extent in stems, leaves and flowers.

Its subcellular location is the cytoplasm. The catalysed reaction is oxaloacetate + phosphate = phosphoenolpyruvate + hydrogencarbonate. By light-reversible phosphorylation. In terms of biological role, through the carboxylation of phosphoenolpyruvate (PEP) it forms oxaloacetate, a four-carbon dicarboxylic acid source for the tricarboxylic acid cycle. In Arabidopsis thaliana (Mouse-ear cress), this protein is Phosphoenolpyruvate carboxylase 3 (PPC3).